Consider the following 371-residue polypeptide: Flagellar P-ring protein (371 aa).

Residues 1–24 (MSIRVLLFSIFTGFLLAAAGPALA) form the signal peptide. Residues 301 to 321 (PQPFSSGTTATQPQTDISAQK) are compositionally biased toward polar residues. Residues 301–322 (PQPFSSGTTATQPQTDISAQKT) form a disordered region.

This sequence belongs to the FlgI family. In terms of assembly, the basal body constitutes a major portion of the flagellar organelle and consists of four rings (L,P,S, and M) mounted on a central rod.

It localises to the periplasm. Its subcellular location is the bacterial flagellum basal body. Functionally, assembles around the rod to form the L-ring and probably protects the motor/basal body from shearing forces during rotation. This is Flagellar P-ring protein from Allorhizobium ampelinum (strain ATCC BAA-846 / DSM 112012 / S4) (Agrobacterium vitis (strain S4)).